The chain runs to 163 residues: Cytochrome c-type biogenesis protein CcmE (163 aa).

Residues 1 to 8 (MNPRRKKR) lie on the Cytoplasmic side of the membrane. Residues 9–29 (LTIILAISAGLAAVIGLVLYA) traverse the membrane as a helical; Signal-anchor for type II membrane protein segment. The Periplasmic portion of the chain corresponds to 30 to 163 (LSQNIDLFYT…TEAQLKGSKQ (134 aa)). Heme is bound by residues His-131 and Tyr-135.

It belongs to the CcmE/CycJ family.

Its subcellular location is the cell inner membrane. Its function is as follows. Heme chaperone required for the biogenesis of c-type cytochromes. Transiently binds heme delivered by CcmC and transfers the heme to apo-cytochromes in a process facilitated by CcmF and CcmH. The chain is Cytochrome c-type biogenesis protein CcmE from Aeromonas hydrophila subsp. hydrophila (strain ATCC 7966 / DSM 30187 / BCRC 13018 / CCUG 14551 / JCM 1027 / KCTC 2358 / NCIMB 9240 / NCTC 8049).